The chain runs to 189 residues: Elongation factor P-like protein (189 aa).

This sequence belongs to the elongation factor P family.

This Vibrio atlanticus (strain LGP32) (Vibrio splendidus (strain Mel32)) protein is Elongation factor P-like protein.